Reading from the N-terminus, the 338-residue chain is Oxygen-dependent coproporphyrinogen-III oxidase (338 aa).

S104 is a binding site for substrate. A divalent metal cation contacts are provided by H108 and H118. Residue H118 is the Proton donor of the active site. Substrate is bound at residue 120 to 122 (NYR). Positions 152 and 182 each coordinate a divalent metal cation. The interval 274-309 (YVEFNLVYDRGTIFGLQTNGRTESILMSLPPLVRWE) is important for dimerization.

Belongs to the aerobic coproporphyrinogen-III oxidase family. Homodimer. Requires a divalent metal cation as cofactor.

It localises to the cytoplasm. It catalyses the reaction coproporphyrinogen III + O2 + 2 H(+) = protoporphyrinogen IX + 2 CO2 + 2 H2O. It functions in the pathway porphyrin-containing compound metabolism; protoporphyrin-IX biosynthesis; protoporphyrinogen-IX from coproporphyrinogen-III (O2 route): step 1/1. Involved in the heme and chlorophyll biosynthesis. Catalyzes the aerobic oxidative decarboxylation of propionate groups of rings A and B of coproporphyrinogen-III to yield the vinyl groups in protoporphyrinogen-IX. The polypeptide is Oxygen-dependent coproporphyrinogen-III oxidase (Thermosynechococcus vestitus (strain NIES-2133 / IAM M-273 / BP-1)).